A 470-amino-acid polypeptide reads, in one-letter code: tRNA-2-methylthio-N(6)-dimethylallyladenosine synthase (470 aa).

Residues 1–116 enclose the MTTase N-terminal domain; it reads MTYTVRTYGC…LPALLRRSRH (116 aa). Residues C10, C45, C79, C153, C157, and C160 each contribute to the [4Fe-4S] cluster site. The Radical SAM core domain occupies 139–369; it reads RESNYSAWVS…LDLQNRIALE (231 aa). Positions 372 to 439 constitute a TRAM domain; that stretch reads RKLIGKEVEL…PYHLIGDNAL (68 aa).

The protein belongs to the methylthiotransferase family. MiaB subfamily. As to quaternary structure, monomer. Requires [4Fe-4S] cluster as cofactor.

Its subcellular location is the cytoplasm. It carries out the reaction N(6)-dimethylallyladenosine(37) in tRNA + (sulfur carrier)-SH + AH2 + 2 S-adenosyl-L-methionine = 2-methylsulfanyl-N(6)-dimethylallyladenosine(37) in tRNA + (sulfur carrier)-H + 5'-deoxyadenosine + L-methionine + A + S-adenosyl-L-homocysteine + 2 H(+). Catalyzes the methylthiolation of N6-(dimethylallyl)adenosine (i(6)A), leading to the formation of 2-methylthio-N6-(dimethylallyl)adenosine (ms(2)i(6)A) at position 37 in tRNAs that read codons beginning with uridine. This chain is tRNA-2-methylthio-N(6)-dimethylallyladenosine synthase, found in Tropheryma whipplei (strain Twist) (Whipple's bacillus).